The following is a 567-amino-acid chain: Urease subunit alpha (567 aa).

A Urease domain is found at 129–567; the sequence is GGIDVHVHFI…VPMSQRYFLF (439 aa). Residues His134, His136, and Lys217 each contribute to the Ni(2+) site. An N6-carboxylysine modification is found at Lys217. His219 is a substrate binding site. The Ni(2+) site is built by His246 and His272. Residue His320 is the Proton donor of the active site. Asp360 serves as a coordination point for Ni(2+).

The protein belongs to the metallo-dependent hydrolases superfamily. Urease alpha subunit family. As to quaternary structure, heterotrimer of UreA (gamma), UreB (beta) and UreC (alpha) subunits. Three heterotrimers associate to form the active enzyme. Ni cation serves as cofactor. In terms of processing, carboxylation allows a single lysine to coordinate two nickel ions.

The protein localises to the cytoplasm. It carries out the reaction urea + 2 H2O + H(+) = hydrogencarbonate + 2 NH4(+). Its pathway is nitrogen metabolism; urea degradation; CO(2) and NH(3) from urea (urease route): step 1/1. This is Urease subunit alpha from Blochmanniella floridana.